Consider the following 119-residue polypeptide: Parathyroid hormone (119 aa).

The N-terminal stretch at 1–25 (MTSTKNLAKAIVILYAICFFTNSDG) is a signal peptide. Residues 26 to 31 (RPMMKR) constitute a propeptide that is removed on maturation.

It belongs to the parathyroid hormone family. In terms of assembly, interacts with PTH1R (via N-terminal extracellular domain).

Its subcellular location is the secreted. Its function is as follows. Parathyroid hormone elevates calcium level by dissolving the salts in bone and preventing their renal excretion. Acts by binding to its receptor, PTH1R, activating G protein-coupled receptor signaling. Stimulates [1-14C]-2-deoxy-D-glucose (2DG) transport and glycogen synthesis in osteoblastic cells. This Gallus gallus (Chicken) protein is Parathyroid hormone.